The primary structure comprises 448 residues: Inositol hexakisphosphate kinase 2 (448 aa).

ATP is bound by residues 229-231 (ENL) and Asp242. Residues 238–246 (PCVLDLKMG), Lys244, and 258–265 (KAANQIRK) each bind substrate. Asp405 provides a ligand contact to ATP. His408 is a substrate binding site.

The protein belongs to the inositol phosphokinase (IPK) family. In terms of tissue distribution, highly expressed in brain and lung, and at slightly lower levels in liver, kidney and testis.

Its subcellular location is the nucleus. It carries out the reaction 1D-myo-inositol hexakisphosphate + ATP = 5-diphospho-1D-myo-inositol 1,2,3,4,6-pentakisphosphate + ADP. It participates in phospholipid metabolism; phosphatidylinositol metabolism. Converts inositol hexakisphosphate (InsP6) to diphosphoinositol pentakisphosphate (InsP7/PP-InsP5). May play a role in the regulation of Na(+)-dependent phosphate cotransport, possibly via its role in diphosphoinositol pentakisphosphate (InsP7/PP-InsP5) biosynthesis. This Mus musculus (Mouse) protein is Inositol hexakisphosphate kinase 2 (Ip6k2).